We begin with the raw amino-acid sequence, 372 residues long: Protein phosphatase Mn(2+)-dependent 1K (372 aa).

The transit peptide at 1–29 (MSTAALLTLVRSGGNQVRRRVLLRARGLQ) directs the protein to the mitochondrion. The tract at residues 46–61 (KWSRFDPDGSGRPATW) is critical for association with the BCKDH complex. Positions 94–346 (NVGSASQIGK…DNTTAVVVPF (253 aa)) constitute a PPM-type phosphatase domain. Residues aspartate 127 and glycine 128 each coordinate Mn(2+). At serine 248 the chain carries Phosphoserine. Mn(2+) is bound by residues aspartate 298 and aspartate 337.

It belongs to the PP2C family. As to quaternary structure, monomer. Interacts with E1 and E2 components of the branched-chain alpha-ketoacid dehydrogenase (BCKDH) complex; this interaction requires colocalization in mitochondria. Interacts with BCKDHA but not with BCKDHB of the E1 component. Interacts with the 24-meric E2 core composed of DBT monomers with a 24:1 stoichiometry; the N-terminal region (residues 49-61) of PPM1K and C-terminal linker of the lipoyl domain of DBT (residues 145-160) are critical for this interaction, whereas the lipoyl prosthetic group is dispensable. Competes with BCKDK for binding to the E2 core; this interaction is modulated by branched-chain alpha-keto acids. At steady state, BCKDH holoenzyme preferentially binds BCKDK and BCKDHA is phosphorylated. In response to high levels of branched-chain alpha-keto acids, the inhibitory BCKDK is replaced by activating PPM1K leading to BCKDHA dephosphorylation and BCAA degradation. It depends on Mn(2+) as a cofactor.

It localises to the mitochondrion matrix. It carries out the reaction O-phospho-L-seryl-[3-methyl-2-oxobutanoate dehydrogenase] + H2O = L-seryl-[3-methyl-2-oxobutanoate dehydrogenase] + phosphate. It catalyses the reaction O-phospho-L-seryl-[protein] + H2O = L-seryl-[protein] + phosphate. It participates in protein modification. In terms of biological role, serine/threonine-protein phosphatase component of macronutrients metabolism. Forms a functional kinase and phosphatase pair with BCKDK, serving as a metabolic regulatory node that coordinates branched-chain amino acids (BCAAs) with glucose and lipid metabolism via two distinct phosphoprotein targets: mitochondrial BCKDHA subunit of the branched-chain alpha-ketoacid dehydrogenase (BCKDH) complex and cytosolic ACLY, a lipogenic enzyme of Krebs cycle. At high levels of branched-chain ketoacids, dephosphorylates and activates mitochondrial BCKDH complex, a multisubunit complex consisting of three multimeric components each involved in different steps of BCAA catabolism: E1 composed of BCKDHA and BCKDHB, E2 core composed of DBT monomers, and E3 composed of DLD monomers. Tightly associates with the E2 component of BCKDH complex and dephosphorylates BCKDHA on Ser-347. Regulates the reversible phosphorylation of ACLY in response to changes in cellular carbohydrate abundance such as occurs during fasting to feeding metabolic transition. At fasting state, appears to dephosphorylate ACLY on Ser-455 and inactivate it. Refeeding stimulates MLXIPL/ChREBP transcription factor, leading to increased BCKDK to PPM1K expression ratio, phosphorylation and activation of ACLY that ultimately results in the generation of malonyl-CoA and oxaloacetate immediate substrates of de novo lipogenesis and gluconeogenesis, respectively. Recognizes phosphosites having SxS or RxxS motifs and strictly depends on Mn(2+) ions for the phosphatase activity. Regulates Ca(2+)-induced opening of mitochondrial transition pore and apoptotic cell death. The protein is Protein phosphatase Mn(2+)-dependent 1K (PPM1K) of Bos taurus (Bovine).